The following is a 171-amino-acid chain: uncharacterized protein (171 aa).

This is an uncharacterized protein from Thermofilum pendens.